The chain runs to 249 residues: Tetraspanin-7 (249 aa).

Residues 1–16 (MASRRMETKPVITCLK) lie on the Cytoplasmic side of the membrane. The chain crosses the membrane as a helical span at residues 17–40 (TLLIIYSFVFWITGVILLAVGVWG). The Extracellular portion of the chain corresponds to 41–56 (KLTLGTYISLIAENST). An N-linked (GlcNAc...) asparagine glycan is attached at Asn-54. A helical membrane pass occupies residues 57-75 (NAPYVLIGTGTTIVVFGLF). Topologically, residues 76–86 (GCFATCRGSPW) are cytoplasmic. The chain crosses the membrane as a helical span at residues 87 to 112 (MLKLYAMFLSLVFLAELVAGISGFVF). Topologically, residues 113 to 213 (RHEIKDTFLR…LVTSFMETNM (101 aa)) are extracellular. N-linked (GlcNAc...) asparagine glycosylation is found at Asn-155, Asn-158, Asn-177, and Asn-188. Residues 214–234 (GIIAGVAFGIAFSQLIGMLLA) traverse the membrane as a helical segment. Residues 235–249 (CCLSRFITANQYEMV) lie on the Cytoplasmic side of the membrane.

This sequence belongs to the tetraspanin (TM4SF) family. As to quaternary structure, (Microbial infection) Interacts with herpes simplex virus 1 (HHV-1) UL35. In terms of tissue distribution, not solely expressed in T-cells. Expressed in acute myelocytic leukemia cells of some patients.

The protein resides in the membrane. In terms of biological role, may be involved in cell proliferation and cell motility. The sequence is that of Tetraspanin-7 (TSPAN7) from Homo sapiens (Human).